We begin with the raw amino-acid sequence, 514 residues long: 1-pyrroline-5-carboxylate dehydrogenase (514 aa).

Catalysis depends on residues glutamate 286 and cysteine 320.

Belongs to the aldehyde dehydrogenase family. RocA subfamily.

It carries out the reaction L-glutamate 5-semialdehyde + NAD(+) + H2O = L-glutamate + NADH + 2 H(+). Its pathway is amino-acid degradation; L-proline degradation into L-glutamate; L-glutamate from L-proline: step 2/2. The chain is 1-pyrroline-5-carboxylate dehydrogenase from Staphylococcus saprophyticus subsp. saprophyticus (strain ATCC 15305 / DSM 20229 / NCIMB 8711 / NCTC 7292 / S-41).